The primary structure comprises 513 residues: MQLNSNEISDLIRQRIATFNVTSQARNEGTIVSVSDGIISINGLADVMQGEMIELPGNRYALALNLERHSVGAVVMGPYSDLAEGLKVKGTGRILEVPVGRGLLGRVVNTLGQPIDGKGAIENDGYSPVEIIAPGVIERQSVDQPIQTGYKAVDAMVPIGRGQRELIIGDRQTGKTAMAIDAIINQKDSGIKCVYVAIGQKASTIANVVRKLEEHDALKNTIVVVATASDAAALQYLAPYSGCTMGEYFRDRGEDALIVYDDLSKQAVAYRQISLLLKRPPGREAFPGDVFYLHSRLLERASRVNVSYVERFTKGKVKGKTGSLTALPIIETQAGDVSAFVPTNVISITDGQIFLQTHLFNSGLRPAVDPGISVSRVGGAAQTKIVKKLSGGIRTALAQYRELAAFAQFSSDLDDATRKQLDHGEKVTELMKQKQYAPMSVAEQALAIFSAEKGYLGDVPLASIGDFESALMAYAKSEHSALLDTINKTGQYDDDIEQSLHKLLKTFTATQSW.

ATP is bound at residue 169-176 (GDRQTGKT).

The protein belongs to the ATPase alpha/beta chains family. In terms of assembly, F-type ATPases have 2 components, CF(1) - the catalytic core - and CF(0) - the membrane proton channel. CF(1) has five subunits: alpha(3), beta(3), gamma(1), delta(1), epsilon(1). CF(0) has three main subunits: a(1), b(2) and c(9-12). The alpha and beta chains form an alternating ring which encloses part of the gamma chain. CF(1) is attached to CF(0) by a central stalk formed by the gamma and epsilon chains, while a peripheral stalk is formed by the delta and b chains.

It localises to the cell inner membrane. The enzyme catalyses ATP + H2O + 4 H(+)(in) = ADP + phosphate + 5 H(+)(out). Produces ATP from ADP in the presence of a proton gradient across the membrane. The alpha chain is a regulatory subunit. This is ATP synthase subunit alpha 2 from Photobacterium profundum (strain SS9).